The following is a 206-amino-acid chain: Large ribosomal subunit protein uL3 (206 aa).

Positions 127–151 (SGGPSSHGSKFHRHLGGTGQATTPA) are disordered.

Belongs to the universal ribosomal protein uL3 family. Part of the 50S ribosomal subunit. Forms a cluster with proteins L14 and L19.

In terms of biological role, one of the primary rRNA binding proteins, it binds directly near the 3'-end of the 23S rRNA, where it nucleates assembly of the 50S subunit. This is Large ribosomal subunit protein uL3 from Borreliella burgdorferi (strain ATCC 35210 / DSM 4680 / CIP 102532 / B31) (Borrelia burgdorferi).